Consider the following 430-residue polypeptide: Transcobalamin-2 (430 aa).

The signal sequence occupies residues 1–18 (MELLKALLLLSGVFGALA). Disulfide bonds link C21/C270, C116/C312, and C165/C208. Cob(II)alamin contacts are provided by residues 152 to 156 (TNYYQ), H193, 193 to 197 (HVSVD), N245, S248, Q294, and 398 to 400 (WQL).

Belongs to the eukaryotic cobalamin transport proteins family. In terms of assembly, interacts with CD320 (via LDL-receptor class A domains).

It is found in the secreted. Primary vitamin B12-binding and transport protein. Delivers cobalamin to cells. The protein is Transcobalamin-2 (Tcn2) of Mus musculus (Mouse).